Reading from the N-terminus, the 155-residue chain is Small ribosomal subunit protein uS7c (155 aa).

It belongs to the universal ribosomal protein uS7 family. In terms of assembly, part of the 30S ribosomal subunit.

It is found in the plastid. The protein localises to the chloroplast. Its function is as follows. One of the primary rRNA binding proteins, it binds directly to 16S rRNA where it nucleates assembly of the head domain of the 30S subunit. The sequence is that of Small ribosomal subunit protein uS7c (rps7) from Hydrastis canadensis (Goldenseal).